A 473-amino-acid polypeptide reads, in one-letter code: Phosphatidylserine synthase 2 (473 aa).

Positions 1–25 are disordered; sequence MRRGERRVAGGSGSESPLLKGRRST. At 1-40 the chain is on the cytoplasmic side; sequence MRRGERRVAGGSGSESPLLKGRRSTESEVYDDGTNTFFWR. 3 positions are modified to phosphoserine: Ser12, Ser14, and Ser16. A helical transmembrane segment spans residues 41 to 61; that stretch reads AHTLTVLFILTCALGYVTLLE. The Lumenal segment spans residues 62 to 74; that stretch reads ETPQDTAYNTKRG. A helical transmembrane segment spans residues 75-95; it reads IVASILVFLCFGVTQAKDGPF. Residues 96–104 lie on the Cytoplasmic side of the membrane; that stretch reads SRPHPAYWR. A helical membrane pass occupies residues 105–125; that stretch reads FWLCVSVVYELFLIFILFQTV. The Lumenal portion of the chain corresponds to 126 to 291; the sequence is QDGRQFLKYV…EWKPASSLHR (166 aa). N-linked (GlcNAc...) asparagine glycosylation is present at Asn159. The helical transmembrane segment at 292 to 312 threads the bilayer; it reads WLAVCGIILVFLLAELNTFYL. Position 313 (Lys313) is a topological domain, cytoplasmic. Residues 314–334 traverse the membrane as a helical segment; that stretch reads FVLWMPPEHYLVLLRLVFFVN. Residues 335–354 lie on the Lumenal side of the membrane; it reads VGGVAMREIYDFMDELKPHR. A helical transmembrane segment spans residues 355-375; the sequence is KLGQQAWLVAAITVTELLIVV. The Cytoplasmic segment spans residues 376–381; sequence KYDPHT. The chain crosses the membrane as a helical span at residues 382–402; the sequence is LTLSLPFYISQCWTLGSILVL. The Lumenal portion of the chain corresponds to 403–473; it reads TWTVWRFFLR…TAEEGTSAAS (71 aa). Residues 422-473 form a disordered region; sequence RRQKQQSHQARAVNNRDGHPGPDDDLLGTGTAEEEGTTNDGVTAEEGTSAAS.

It belongs to the phosphatidyl serine synthase family. Highly expressed in testis. Detected at lower levels in kidney and heart.

Its subcellular location is the endoplasmic reticulum membrane. It is found in the membrane. The enzyme catalyses a 1,2-diacyl-sn-glycero-3-phosphoethanolamine + L-serine = a 1,2-diacyl-sn-glycero-3-phospho-L-serine + ethanolamine. It carries out the reaction 1-hexadecanoyl-2-(9Z-octadecenoyl)-sn-glycero-3-phosphoethanolamine + L-serine = 1-hexadecanoyl-2-(9Z-octadecenoyl)-sn-glycero-3-phospho-L-serine + ethanolamine. It catalyses the reaction 1-hexadecanoyl-2-(4Z,7Z,10Z,13Z,16Z,19Z-docosahexaenoyl)-sn-glycero-3-phosphoethanolamine + L-serine = 1-hexadecanoyl-2-(4Z,7Z,10Z,13Z,16Z,19Z-docosahexaenoyl)-sn-glycero-3-phosphoserine + ethanolamine. The catalysed reaction is 1-octadecanoyl-2-(5Z,8Z,11Z,14Z)-eicosatetraenoyl-sn-glycero-3-phosphoethanolamine + L-serine = 1-octadecanoyl-2-(5Z,8Z,11Z,14Z)-eicosatetraenoyl-sn-glycero-3-phosphoserine + ethanolamine. The enzyme catalyses 1-octadecanoyl-2-(4Z,7Z,10Z,13Z,16Z,19Z-docosahexaenoyl)-sn-glycero-3-phosphoethanolamine + L-serine = 1-octadecanoyl-2-(4Z,7Z,10Z,13Z,16Z,19Z-docosahexaenoyl)-sn-glycero-3-phosphoserine + ethanolamine. It carries out the reaction 1-(1Z-octadecenyl)-2-(4Z,7Z,10Z,13Z,16Z,19Z-docosahexaenoyl)-sn-glycero-3-phosphoethanolamine + L-serine = 1-(1Z-octadecenyl)-2-(4Z,7Z,10Z,13Z,16Z,19Z-docosahexaenoyl)-sn-glycero-3-phospho-L-serine + ethanolamine. It catalyses the reaction 1-octadecanoyl-2-(9Z-octadecenoyl)-sn-glycero-3-phosphoethanolamine + L-serine = 1-octadecanoyl-2-(9Z-octadecenoyl)-sn-glycero-3-phospho-L-serine + ethanolamine. The catalysed reaction is 1-(1Z-octadecenyl)-2-(9Z-octadecenoyl)-sn-glycero-3-phosphoethanolamine + L-serine = 1-(1Z-octadecenyl)-2-(9Z-octadecenoyl)-sn-glycero-3-phospho-L-serine + ethanolamine. The enzyme catalyses 1-(1Z-octadecenyl)-2-(5Z,8Z,11Z,14Z- eicosatetraenoyl)-sn-glycero-3-phosphoethanolamine + L-serine = 1-(1Z-octadecenyl)-2-(5Z,8Z,11Z,14Z-eicosatetraenoyl)-sn-glycero-3-phospho-L-serine + ethanolamine. The protein operates within phospholipid metabolism; phosphatidylserine biosynthesis. Its activity is regulated as follows. Almost complete inhibition by ethanolamine in both the mitochondria-associated membrane (MAM) and endoplasmic reticulum (ER) per se. Catalyzes a base-exchange reaction in which the polar head group of phosphatidylethanolamine (PE) or phosphatidylcholine (PC) is replaced by L-serine. Catalyzes the conversion of phosphatatidylethanolamine and does not act on phosphatidylcholine. Can utilize both phosphatidylethanolamine (PE) plasmalogen and diacyl PE as substrate and the latter is six times better utilized, indicating the importance of an ester linkage at the sn-1 position. Although it shows no sn-1 fatty acyl preference, exhibits significant preference towards docosahexaenoic acid (22:6n-3) compared with 18:1 or 20:4 at the sn-2 position. In Mus musculus (Mouse), this protein is Phosphatidylserine synthase 2 (Ptdss2).